The sequence spans 214 residues: uncharacterized protein (214 aa).

The active-site Proton acceptor is the Y129.

The protein belongs to the NAD(P)-dependent epimerase/dehydratase family.

This is an uncharacterized protein from Bacillus subtilis (strain 168).